Consider the following 320-residue polypeptide: Polycomb complex protein BMI-1-A (320 aa).

An RING-type zinc finger spans residues 18–57 (CVLCGGYFIDATTIIECLHSFCKMCIVRYLETSKYCPICD). The short motif at 81–95 (KLVPGLFKNEMKRRR) is the Nuclear localization signal element. The disordered stretch occupies residues 234–320 (ITHPQEGLNN…ALNGSSTSSG (87 aa)). Residues 262 to 281 (VPSTSSPLPSPSTLVQPSQP) are compositionally biased toward low complexity. Over residues 285 to 304 (HISSPINGTTMTSPNRQFNF) the composition is skewed to polar residues.

In terms of assembly, component of a PRC1-like complex. Homodimer. Interacts with cbx2.

Its subcellular location is the nucleus. In terms of biological role, component of a Polycomb group (PcG) multiprotein PRC1-like complex, a complex class required to maintain the transcriptionally repressive state of many genes, including Hox genes, throughout development. PcG PRC1 complex acts via chromatin remodeling and modification of histones; it mediates monoubiquitination of histone H2A 'Lys-119', rendering chromatin heritably changed in its expressibility. In the PRC1 complex, it is required to stimulate the E3 ubiquitin-protein ligase activity of rnf2. The protein is Polycomb complex protein BMI-1-A (bmi1a) of Danio rerio (Zebrafish).